The sequence spans 123 residues: MKWAYKEENNFEKRRAEGDKIRRKYPDRIPVIVEKAPKSKLHDLDKKKYLVPSDLTVGQFYFLIRKRIQLRPEDALFFFVNNVIPQTMTTMGQLYQDHHEEDLFLYIAYSDESVYGGEVEKKE.

G116 carries Phosphatidylethanolamine amidated glycine lipidation. Residues 117 to 123 (GEVEKKE) constitute a propeptide, removed in mature form.

This sequence belongs to the ATG8 family. In terms of assembly, interacts with sepa-1 (via the LIR motifs); the interaction is direct. Interacts with allo-1 (via the LIR motif). Interacts with sqst-1 (via the LIR motifs); the interaction is direct. Both lipidated and unlipidated forms interact with epg-7 (via the LIR motif); the interaction is direct. Interacts with epg-2 (via the LIR motifs); the interaction is direct. Interacts with atg-13; the interaction is direct. Interacts with unc-51 (via the LIR motif); the interaction is direct. Interacts with atg-7; the interaction is direct. Interacts with atg-3. The interaction with atg-7 and atg-3 may be required for the lipidation of lgg-1. In terms of processing, cleaved by atg-4.1 and/or atg-4.2, after Gly-116 to form a thioester bond with 'Cys-523' of atg-7 (E1-like activating enzyme) before being transferred to 'Cys-255' of atg-3 (E2 conjugating enzyme), in order to be amidated with phosphatidylethanolamine. This lipid modification anchors lgg-1 to membranes and can be reversed by atg-4.2, releasing soluble lgg-1. C-terminal cleavage is essential for autophagosome initiation and biogenesis. Lipidation is not essential for autophagy or development but the lipidated form is involved in cargo recognition and autophagosome biogenesis. Lipidation regulates lgg-2-positive autophagosome formation. Expressed in PLML touch receptor neuron and in the ventral nerve cord. Expressed in AIY interneurons.

It is found in the preautophagosomal structure. It localises to the cytoplasmic vesicle. Its subcellular location is the autophagosome. The protein localises to the autophagosome membrane. The protein resides in the lysosome lumen. It is found in the mitochondrion. It localises to the cytoplasm. Its subcellular location is the phagosome membrane. The protein localises to the cell membrane. The protein resides in the cell projection. It is found in the dendrite. It localises to the perikaryon. Its function is as follows. Ubiquitin-like modifier involved in the formation of autophagosomal vacuoles (autophagosomes). When lipidated mediates tethering between adjacent membranes and stimulates membrane fusion during autophagy. Recruits lipidated-lgg-2 to maturing autophagosomes. Acts in the aggrephagy pathway, which is the macroautophagic degradation of ubiquitinated protein aggregates, and preferentially interacts with autophagy proteins and substrates containing LIR motifs to mediate autophagosome formation and protein aggregate degradation. In particular, binds to components of the unc-51-atg-13 complex to regulate autophagosome formation and cargo sequestration. Required for the degradation of specific sepa-1- and sqst-1-containing protein aggregates during embryogenesis. Involved in allophagy, which is an autophagic process in which paternal mitochondria and organelles are degraded during fertilization, and moreover is required for the formation of lgg-2-positive allophagic autophagosomes in embryos. Involved in the clearance of apoptotic cells by promoting the delivery of engulfed apoptotic cells to the lysosome. Plays a role in the distribution and clearance of germ cell specific P-granules from somatic cells. Also plays a role in the autophagy-mediated degradation of ribosomal RNA and ribosomal proteins in lysosomes. Involved in xenophagy, the autophagy-mediated degradation of pathogens and pathogen products, such as toxins. Required for normal survival when exposed to pathogenic bacteria S.typhimurium probably by promoting autophagic degradation of intracellular S.typhimurium. Also plays a role in membrane-pore repair. Plays a role in mitophagy. Essential for dauer development and longevity, including longevity in response to moderate, short-term heat shock, also known as a hormetic heat shock. The polypeptide is Protein lgg-1 (Caenorhabditis elegans).